The primary structure comprises 384 residues: Carbazole 1,9a-dioxygenase, terminal oxygenase component CarAa (384 aa).

The 107-residue stretch at 29-135 folds into the Rieske domain; that stretch reads WYPVMFSKEI…VQEAKGCVFI (107 aa). Residues Cys69, His71, Cys90, and His93 each contribute to the [2Fe-2S] cluster site.

In terms of assembly, homotrimer. Carbazole 1,9a-dioxygenase complex consists of a terminal oxygenase component CarAa, a ferredoxin reductase component CarAd and a ferredoxin component CarAc. [2Fe-2S] cluster serves as cofactor.

The catalysed reaction is 9H-carbazole + NADH + O2 + H(+) = 2'-aminobiphenyl-2,3-diol + NAD(+). It carries out the reaction 9H-carbazole + NADPH + O2 + H(+) = 2'-aminobiphenyl-2,3-diol + NADP(+). Part of the multicomponent carbazole 1,9a-dioxygenase (CARDO), that converts carbazole (CAR) into 2-aminobiphenyl-2,3-diol. Catalyzes the dioxygenation at the angular (C-9a) and adjacent (C-1) positions of carbazole to yield a highly unstable cis-hydrodiol intermediate which is spontaneously converted to 2-aminobiphenyl-2,3-diol. It is also able to attack the angular position adjacent of hetero atom of heterocyclic aromatic compounds such as polychlorinated dibenzo-p-dioxin (DD) and dibenzofuran (DBF). It was also shown that CARDO has the ability to metabolize biphenyl and polycyclic aromatic hydrocarbons, such as naphthalene and phenanthrene. The polypeptide is Carbazole 1,9a-dioxygenase, terminal oxygenase component CarAa (carAa) (Metapseudomonas resinovorans (Pseudomonas resinovorans)).